A 295-amino-acid polypeptide reads, in one-letter code: Tyrosine recombinase XerC (295 aa).

A Core-binding (CB) domain is found at 1–85 (MLTALNRYWD…ALRRFLSFLV (85 aa)). Residues 106–285 (HLPKNMDGEQ…NFQHLAEVYD (180 aa)) enclose the Tyr recombinase domain. Active-site residues include Arg145, Lys169, His237, Arg240, and His263. The active-site O-(3'-phospho-DNA)-tyrosine intermediate is the Tyr272.

The protein belongs to the 'phage' integrase family. XerC subfamily. In terms of assembly, forms a cyclic heterotetrameric complex composed of two molecules of XerC and two molecules of XerD.

It is found in the cytoplasm. In terms of biological role, site-specific tyrosine recombinase, which acts by catalyzing the cutting and rejoining of the recombining DNA molecules. The XerC-XerD complex is essential to convert dimers of the bacterial chromosome into monomers to permit their segregation at cell division. It also contributes to the segregational stability of plasmids. The polypeptide is Tyrosine recombinase XerC (Haemophilus influenzae (strain 86-028NP)).